The sequence spans 244 residues: Orotidine 5'-phosphate decarboxylase (244 aa).

Substrate is bound by residues Asp20, Lys42, 70-79, Thr125, Arg186, Gln195, Gly215, and Arg216; that span reads DLKFFDIPAT. Catalysis depends on Lys72, which acts as the Proton donor.

The protein belongs to the OMP decarboxylase family. Type 1 subfamily. Homodimer.

The enzyme catalyses orotidine 5'-phosphate + H(+) = UMP + CO2. It participates in pyrimidine metabolism; UMP biosynthesis via de novo pathway; UMP from orotate: step 2/2. Catalyzes the decarboxylation of orotidine 5'-monophosphate (OMP) to uridine 5'-monophosphate (UMP). The protein is Orotidine 5'-phosphate decarboxylase of Xylella fastidiosa (strain M23).